Consider the following 639-residue polypeptide: MYEQFEFSFFFFENSDNKVKYKAHLISSIKRWSIITCMRCFWTVQKSIFKARFFACRNFVKKHNYKLISTMTGSTEMVPPTMKHTVDNKRLSSPLTDSGNRRTKKPKLRKYKAKKVETTSPMGVLEFEVNDLLKSQNLSREQVLNDVTSILNDKSSTDGPIVLQYHREVKNVKVLEITSNGNGLALIDNPVETEKKQVVIIPFGLPGDVVNIKVFKTHPYYVESDLLDVVEKSPMRRDDLIRDKYFGKSSGSQLEFLTYDDQLELKRKTIMNAYKFFAPRLVAEKLLPPFDTTVASPLQFGYRTKITPHFDMPKRKQKELSVRPPLGFGQKGRPQWRKDTLDIGGHGSILDIDECVLATEVLNKGLTNERRKFEQEFKNYKKGATILLRENTTILDPSKPTLEQLTEEASRDENGDISYVEVEDKKNNVRLAKTCVTNPRQIVTEYVDGYTFNFSAGEFFQNNNSILPIVTKYVRDNLQAPAKGDDNKTKFLVDAYCGSGLFSICSSKGVDKVIGVEISADSVSFAEKNAKANGVENCRFIVGKAEKLFESIDTPSENTSVILDPPRKGCDELFLKQLAAYNPAKIIYISCNVHSQARDVEYFLKETENGSAHQIESIRGFDFFPQTHHVESVCIMKRI.

The interval 78–113 is disordered; that stretch reads VPPTMKHTVDNKRLSSPLTDSGNRRTKKPKLRKYKA. Residues Ser-92 and Ser-93 each carry the phosphoserine modification. The segment covering 101 to 113 has biased composition (basic residues); sequence RRTKKPKLRKYKA. The region spanning 163–228 is the TRAM domain; sequence LQYHREVKNV…PYYVESDLLD (66 aa). S-adenosyl-L-methionine-binding residues include Gln-461, Tyr-496, Glu-517, and Asp-564. Residue Cys-591 is the Nucleophile of the active site. Catalysis depends on Glu-631, which acts as the Proton acceptor.

This sequence belongs to the class I-like SAM-binding methyltransferase superfamily. RNA M5U methyltransferase family.

The catalysed reaction is uridine(54) in tRNA + S-adenosyl-L-methionine = 5-methyluridine(54) in tRNA + S-adenosyl-L-homocysteine + H(+). In terms of biological role, catalyzes the formation of 5-methyl-uridine at position 54 (m5U54) in all tRNA. May also have a role in tRNA stabilization or maturation. This Saccharomyces cerevisiae (strain ATCC 204508 / S288c) (Baker's yeast) protein is tRNA (uracil(54)-C(5))-methyltransferase (TRM2).